Here is a 444-residue protein sequence, read N- to C-terminus: 23S rRNA (uracil(1939)-C(5))-methyltransferase RlmD (444 aa).

Residues 11 to 70 form the TRAM domain; sequence NSIKNHILKNIKVEKLDHRGRGLAYFQNKPLFIDGALAGELLEVQIVESKKRYSKGKIKK. [4Fe-4S] cluster contacts are provided by Cys83, Cys89, Cys92, and Cys171. S-adenosyl-L-methionine-binding residues include Gln277, Phe306, Asn311, Glu327, Asp354, and Asp376. The active-site Nucleophile is Cys402.

This sequence belongs to the class I-like SAM-binding methyltransferase superfamily. RNA M5U methyltransferase family. RlmD subfamily.

It carries out the reaction uridine(1939) in 23S rRNA + S-adenosyl-L-methionine = 5-methyluridine(1939) in 23S rRNA + S-adenosyl-L-homocysteine + H(+). Functionally, catalyzes the formation of 5-methyl-uridine at position 1939 (m5U1939) in 23S rRNA. The polypeptide is 23S rRNA (uracil(1939)-C(5))-methyltransferase RlmD (Psychromonas ingrahamii (strain DSM 17664 / CCUG 51855 / 37)).